Consider the following 240-residue polypeptide: Ubiquitin domain-containing protein 1 (240 aa).

A disordered region spans residues 1 to 48; sequence MGGCVGRPQGESQRSQSRASGQQRKRAGRNEPLKKERPRWKSDYPMTD. Residues 12–22 are compositionally biased toward low complexity; it reads SQRSQSRASGQ. Residues 28–42 show a composition bias toward basic and acidic residues; it reads GRNEPLKKERPRWKS. The 76-residue stretch at 153–228 folds into the Ubiquitin-like domain; that stretch reads FQLKVRLSTG…DTSYCKPATR (76 aa).

In terms of biological role, may be involved in the regulation of cellular senescence through a positive feedback loop with TP53. The chain is Ubiquitin domain-containing protein 1 (ubtd1) from Xenopus tropicalis (Western clawed frog).